The chain runs to 30 residues: Small toxic protein BsrE (30 aa).

Residues 4-24 (FQALMLMLAIGSFIIALLTYI) traverse the membrane as a helical segment.

Its subcellular location is the cell membrane. Functionally, toxic component of a type I toxin-antitoxin (TA) system; overexpression in the absence of cognate antisense antitoxin SR5 RNA leads to cell lysis. Base pairing occurs between the 3' UTRs of bsrE mRNA and SR5 RNA which leads to bsrE mRNA degradation initiated by RNase III (rnc) and RNase J1 (rnjA). Genetic evidence suggests an unidentified RNA-binding protein may exist that promotes TA RNA interaction. The protein is Small toxic protein BsrE of Bacillus subtilis (strain 168).